A 1028-amino-acid chain; its full sequence is MRLLWKLVILLPLINSCAGEGRFSRPIFIQEPQDVIFPLDLSRSEIILTCTANGYPSPHYRWKQNGTDIDFGMTYHYRLDGGSLAISSPRTDQDIGIYQCLATNPVGTILSRKAKLQFAYIEDFETKTRSTVSVREGQGVVLLCGPPPHFGELSYAWTFNDSPLYVQEDKRRFVSQDTGNLYFAKVEPSDVGNYTCFVTNKEAHRSVQGPPTPLVLRTDGVMGEYEPKIEVRFPETIQAAKDSSIKLECFALGNPVPDISWKRLDGSPMPGKIKYSKSQAILEIPKFQQEDEGFYECIAGNLRGRNLAKGQLIFYAPPEWEQKIQNTYLSIYDSLFWECKASGNPNPSYTWLKNGQRLNTEERIQIENGTLIITMLNISDSGIYQCAAENKYQTIYANAELRVLASAPDFSKNPIKKISVVQVGGDISIECKPNAFPKASISWKRGTENLKQSKRVLFLEDGSLKICNVTRADAGSYTCVATNQFGNGKSSGGLVVKERTIITVPPSKMDVTVGESIVLPCQVSHDPTMEVLFVWYFNGDIIDLKKGVAHFERIGGESVGDLMIRNIQLGHSGKYLCTVQTTLERLSAVADIIVRGPPGPPEDVKVEHISSTTSQLSWRPGPDNNSPIQIFTIQTRTPFSVGWQAVATVPEILNGQTYNATVVGLSPWVEYEFRVVAGNNIGIGEPSKPSELLRTKASVPNVAPGNINGGGGSRSELVITWEAIPEELQNGEGFGYIVMFRPVGTTAWMKERVALVESSKFIYRNESIMPLSPFEVKVGVYNNEGEGSLSTVTIVYSGEDEPQLAPRGTSVQSFSASEMEVSWNAIAWNRNTGRVLGYEVLYWTDNSKESMIGKIRVSGNVTTKNITGLRANTIYFASVRAYNTAGTGPSSLPVNVTTKKSPPSQPPANIAWKLSNSKLCLNWEHVKTMENESEVLGYKILYRQNRQSKTHILETNNTSAELLVPFEEDYLIEIRTVSDGGDGSSSEEIRIPKMSSLSSTGVQISKPSTQSLSMVGVFYCFAIHPLSR.

The first 19 residues, 1–19 (MRLLWKLVILLPLINSCAG), serve as a signal peptide directing secretion. Ig-like C2-type domains follow at residues 32–117 (PQDV…AKLQ), 122–208 (EDFE…RSVQ), 227–308 (PKIE…RNLA), 318–402 (PEWE…AELR), 408–502 (PDFS…RTII), and 500–587 (TIIT…ERLS). Disulfide bonds link Cys-50–Cys-100, Cys-144–Cys-196, Cys-249–Cys-297, Cys-339–Cys-386, Cys-431–Cys-479, and Cys-521–Cys-577. Residues Asn-65 and Asn-193 are each glycosylated (N-linked (GlcNAc...) asparagine). Asn-368, Asn-377, and Asn-468 each carry an N-linked (GlcNAc...) asparagine glycan. Fibronectin type-III domains follow at residues 600-698 (PPED…TKAS), 703-800 (APGN…SGED), 805-901 (APRG…TKKS), and 902-996 (PPSQ…KMSS). Residues Asn-659, Asn-765, Asn-860, and Asn-865 are each glycosylated (N-linked (GlcNAc...) asparagine). A Phosphotyrosine modification is found at Tyr-882. N-linked (GlcNAc...) asparagine glycosylation is found at Asn-895, Asn-931, Asn-956, and Asn-957. Ser-999 is lipidated: GPI-anchor amidated serine. A propeptide spans 1000–1028 (TGVQISKPSTQSLSMVGVFYCFAIHPLSR) (removed in mature form).

Belongs to the immunoglobulin superfamily. Contactin family. Interacts with PTPRG. In terms of tissue distribution, expressed in brain. In brain, it is preferentially expressed in the accessory olfactory bulb, layers II/III and V of the cerebral cortex, piriform cortex, anterior thalamic nuclei, locus coeruleus of the pons and mesencephalic trigeminal nucleus and in Purkinje cells of the cerebellum.

It localises to the cell membrane. Its function is as follows. Contactins mediate cell surface interactions during nervous system development. Participates in oligodendrocytes generation by acting as a ligand of NOTCH1. Its association with NOTCH1 promotes NOTCH1 activation through the released notch intracellular domain (NICD) and subsequent translocation to the nucleus. Involved in motor coordination. This is Contactin-6 (Cntn6) from Mus musculus (Mouse).